A 60-amino-acid chain; its full sequence is Large ribosomal subunit protein uL30 (60 aa).

Belongs to the universal ribosomal protein uL30 family. As to quaternary structure, part of the 50S ribosomal subunit.

The sequence is that of Large ribosomal subunit protein uL30 from Saccharopolyspora erythraea (strain ATCC 11635 / DSM 40517 / JCM 4748 / NBRC 13426 / NCIMB 8594 / NRRL 2338).